A 40-amino-acid polypeptide reads, in one-letter code: Large ribosomal subunit protein bL36 (40 aa).

It belongs to the bacterial ribosomal protein bL36 family.

The sequence is that of Large ribosomal subunit protein bL36 from Corynebacterium aurimucosum (strain ATCC 700975 / DSM 44827 / CIP 107346 / CN-1) (Corynebacterium nigricans).